Consider the following 587-residue polypeptide: Dynein axonemal intermediate chain 2 (587 aa).

4 WD repeats span residues 214 to 254 (RPAS…NPVE), 261 to 302 (SHRD…EPTE), 362 to 401 (GHHG…SSIM), and 405 to 445 (YHTS…NNPS). Disordered regions lie at residues 519 to 542 (LKER…DMKE) and 562 to 587 (KEQQ…IVHE).

Belongs to the dynein intermediate chain family. As to quaternary structure, consists of at least two heavy chains and a number of intermediate and light chains. Interacts with DNAAF2. Interacts with DNAAF6/PIH1D3. Interacts with HEATR2; probably involved in outer arm dynein assembly. Interacts with C16ORF71/DAAP1.

Its subcellular location is the cytoplasm. The protein localises to the cytoskeleton. The protein resides in the cilium axoneme. It localises to the dynein axonemal particle. Functionally, part of the dynein complex of multiciliated cell cilia. In Xenopus laevis (African clawed frog), this protein is Dynein axonemal intermediate chain 2 (dnai2).